A 143-amino-acid chain; its full sequence is Transcription antitermination protein NusB (143 aa).

Belongs to the NusB family.

Functionally, involved in transcription antitermination. Required for transcription of ribosomal RNA (rRNA) genes. Binds specifically to the boxA antiterminator sequence of the ribosomal RNA (rrn) operons. In Buchnera aphidicola subsp. Acyrthosiphon pisum (strain APS) (Acyrthosiphon pisum symbiotic bacterium), this protein is Transcription antitermination protein NusB.